Consider the following 500-residue polypeptide: DNA double-strand break repair helicase HerA (500 aa).

ATP contacts are provided by residues arginine 142, 151 to 156 (GSGKSN), and 459 to 460 (KI).

This sequence belongs to the HerA family. In terms of assembly, homohexamer. Forms a complex with NurA.

It carries out the reaction Couples ATP hydrolysis with the unwinding of duplex DNA at the replication fork by translocating in the 5'-3' direction. This creates two antiparallel DNA single strands (ssDNA). The leading ssDNA polymer is the template for DNA polymerase III holoenzyme which synthesizes a continuous strand.. It catalyses the reaction ATP + H2O = ADP + phosphate + H(+). The catalysed reaction is Couples ATP hydrolysis with the unwinding of duplex DNA by translocating in the 3'-5' direction.. With respect to regulation, ATPase activity is stimulated in the presence of linear double-stranded (ds)DNA. Helicase activity requires the presence of NurA. LhrC-Core (Hel112) inhibits the exonuclease activity of the HerA-NurA complex on ss- and dsDNA, has no effect on the nicking activity of NurA. Its function is as follows. Involved in DNA double-strand break (DSB) repair. Probably acts with NurA to stimulate resection of the 5' strand and produce the long 3' single-strand that is required for RadA loading. NurA and HerA together stimulate the end-resection of six nucleotides of a linear DNA substrate. Has DNA-dependent ATPase activity and bidirectional DNA helicase activity. Preferentially binds single stranded (ss)DNA, bubble and semiforked DNA substrate over other DNA molecules tested. Stimulates the exo- but not endonuclease activity of NurA. The protein is DNA double-strand break repair helicase HerA of Saccharolobus solfataricus (strain ATCC 35092 / DSM 1617 / JCM 11322 / P2) (Sulfolobus solfataricus).